A 20-amino-acid chain; its full sequence is MTINFVFGFHIVTLSICQSF.

Belongs to the coronaviruses ns4.9 protein family.

This Sus scrofa (Pig) protein is Truncated non-structural protein of 4.9 kDa.